The chain runs to 47 residues: Protein YpaB (47 aa).

The protein is Protein YpaB (ypaB) of Escherichia coli (strain K12).